Reading from the N-terminus, the 495-residue chain is GTPase Der (495 aa).

EngA-type G domains are found at residues 3–166 and 208–381; these read PVIA…MDAE and IKLA…DCST. GTP-binding positions include 9–16, 56–60, 118–121, 214–221, 261–265, and 326–329; these read GRPNVGKS, DTGGI, NKTD, DTAGV, and NKWD. The region spanning 382–466 is the KH-like domain; the sequence is KRVGTSLLTR…PIRIQFKEGE (85 aa).

The protein belongs to the TRAFAC class TrmE-Era-EngA-EngB-Septin-like GTPase superfamily. EngA (Der) GTPase family. As to quaternary structure, associates with the 50S ribosomal subunit.

GTPase that plays an essential role in the late steps of ribosome biogenesis. This chain is GTPase Der, found in Yersinia pseudotuberculosis serotype O:3 (strain YPIII).